Here is a 509-residue protein sequence, read N- to C-terminus: Major envelope glycoprotein (509 aa).

Residues 1–17 (MVRTAVLILLLVRFSEP) form the signal peptide. Residues asparagine 34, asparagine 156, asparagine 194, asparagine 351, asparagine 381, and asparagine 423 are each glycosylated (N-linked (GlcNAc...) asparagine; by host). Serine 479 carries O-palmitoyl serine; by host lipidation. The helical transmembrane segment at 480–502 (FMLGHAFSFMLTVGVIIFLFCMV) threads the bilayer. Asparagine 504 is a glycosylation site (N-linked (GlcNAc...) asparagine; by host).

It belongs to the baculoviridae gp64 family. Palmitoylated.

Its subcellular location is the virion membrane. It localises to the host cell membrane. In terms of biological role, envelope phosphoglycoprotein which mediates the fusion of viral and host endosomal membranes leading to virus entry into the host cell. The protein is Major envelope glycoprotein (GP67) of Choristoneura fumiferana nuclear polyhedrosis virus (CfMNPV).